Consider the following 282-residue polypeptide: Armadillo repeat-containing protein 1 (282 aa).

Met1 is modified (N-acetylmethionine). The stretch at 39-81 is one ARM repeat; the sequence is GCLPGLILSMDHPNPPVVHSALLALRYLAECRANREKMKGELG. Position 137 is a phosphothreonine (Thr137). 4 positions are modified to phosphoserine: Ser189, Ser246, Ser260, and Ser267. A disordered region spans residues 239–261; that stretch reads DYLPEDESPTKEQDKAVSRVGSH. Residues 246–255 are compositionally biased toward basic and acidic residues; that stretch reads SPTKEQDKAV.

As to quaternary structure, interacts with mitochondrial contact site and cristae organizing system (MICOS) complex components IMMT/MIC60 and MICOS10/MIC10. Interacts with mitochondrial outer membrane sorting assembly machinery (SAM) complex components SAMM50 and MTX1.

It localises to the cytoplasm. The protein localises to the mitochondrion. It is found in the mitochondrion outer membrane. Functionally, in association with mitochondrial contact site and cristae organizing system (MICOS) complex components and mitochondrial outer membrane sorting assembly machinery (SAM) complex components may regulate mitochondrial dynamics playing a role in determining mitochondrial length, distribution and motility. This Pongo abelii (Sumatran orangutan) protein is Armadillo repeat-containing protein 1 (ARMC1).